We begin with the raw amino-acid sequence, 409 residues long: Glucose-1-phosphate adenylyltransferase (409 aa).

Residues Gly168, 183 to 184 (EK), and Ser201 contribute to the alpha-D-glucose 1-phosphate site.

This sequence belongs to the bacterial/plant glucose-1-phosphate adenylyltransferase family. Homotetramer.

The catalysed reaction is alpha-D-glucose 1-phosphate + ATP + H(+) = ADP-alpha-D-glucose + diphosphate. It participates in glycan biosynthesis; glycogen biosynthesis. Functionally, involved in the biosynthesis of ADP-glucose, a building block required for the elongation reactions to produce glycogen. Catalyzes the reaction between ATP and alpha-D-glucose 1-phosphate (G1P) to produce pyrophosphate and ADP-Glc. The polypeptide is Glucose-1-phosphate adenylyltransferase (Corynebacterium glutamicum (strain R)).